The sequence spans 664 residues: DNA primase (664 aa).

The CHC2-type zinc-finger motif lies at Cys-40–Cys-64. A compositionally biased stretch (basic and acidic residues) spans Gly-94–Gly-104. Positions Gly-94 to Ser-115 are disordered. The Toprim domain occupies Asp-262 to Pro-344. Residues Glu-268, Asp-312, and Asp-314 each contribute to the Mg(2+) site. The interval Pro-483–Val-521 is disordered. Residues Trp-487–Ala-515 are compositionally biased toward basic and acidic residues.

It belongs to the DnaG primase family. Monomer. Interacts with DnaB. It depends on Zn(2+) as a cofactor. Requires Mg(2+) as cofactor.

It carries out the reaction ssDNA + n NTP = ssDNA/pppN(pN)n-1 hybrid + (n-1) diphosphate.. Functionally, RNA polymerase that catalyzes the synthesis of short RNA molecules used as primers for DNA polymerase during DNA replication. The protein is DNA primase of Pseudomonas aeruginosa (strain ATCC 15692 / DSM 22644 / CIP 104116 / JCM 14847 / LMG 12228 / 1C / PRS 101 / PAO1).